The sequence spans 417 residues: Tyrosine--tRNA ligase (417 aa).

An L-tyrosine-binding site is contributed by Tyr34. Residues 39 to 48 (PTGDSMHIGH) carry the 'HIGH' region motif. Tyr165 and Gln169 together coordinate L-tyrosine. The 'KMSKS' region motif lies at 227–231 (KFGKS). Position 230 (Lys230) interacts with ATP. Residues 349-417 (ENIVLWLVDT…KKKYFLARVK (69 aa)) form the S4 RNA-binding domain.

Belongs to the class-I aminoacyl-tRNA synthetase family. TyrS type 1 subfamily. In terms of assembly, homodimer.

It is found in the cytoplasm. It catalyses the reaction tRNA(Tyr) + L-tyrosine + ATP = L-tyrosyl-tRNA(Tyr) + AMP + diphosphate + H(+). Its function is as follows. Catalyzes the attachment of tyrosine to tRNA(Tyr) in a two-step reaction: tyrosine is first activated by ATP to form Tyr-AMP and then transferred to the acceptor end of tRNA(Tyr). The polypeptide is Tyrosine--tRNA ligase (Pediococcus pentosaceus (strain ATCC 25745 / CCUG 21536 / LMG 10740 / 183-1w)).